A 208-amino-acid polypeptide reads, in one-letter code: uncharacterized protein (208 aa).

This is an uncharacterized protein from Legionella pneumophila subsp. pneumophila (strain Philadelphia 1 / ATCC 33152 / DSM 7513).